A 236-amino-acid chain; its full sequence is Syntaxin-8 (236 aa).

The Cytoplasmic segment spans residues 1 to 215 (MAPDPWFSTY…MVDRKSASCG (215 aa)). Residues 42–65 (VTIRALLQNLKEKIALLKDLLLRA) adopt a coiled-coil conformation. Positions 145–207 (QKIIQEQDAG…RNETRRVNMV (63 aa)) constitute a t-SNARE coiled-coil homology domain. The residue at position 160 (Ser-160) is a Phosphoserine. Residues 216–232 (MIMVILLLLVAIVVVAV) form a helical; Anchor for type IV membrane protein membrane-spanning segment. Residues 233 to 236 (WPTN) are Vesicular-facing.

This sequence belongs to the syntaxin family. As to quaternary structure, forms a SNARE complex with STX7, VTI1B and VAMP8 which functions in the homotypic fusion of late endosomes. Part of the SNARE core complex containing STX7, VAMP8 and VTI1B. Interacts with VAMP8. Interacts with HECTD3. Interacts with TPC1. Ubiquitinated by HECTD3. Highly expressed in heart. Also found in brain, kidney, liver, lung, placenta, skeletal muscle, spleen and pancreas.

The protein localises to the membrane. Its function is as follows. Vesicle trafficking protein that functions in the early secretory pathway, possibly by mediating retrograde transport from cis-Golgi membranes to the ER. This Homo sapiens (Human) protein is Syntaxin-8 (STX8).